A 412-amino-acid polypeptide reads, in one-letter code: Multidrug resistance protein MdtA (412 aa).

Positions 1–21 (MKGSNIRRWGAALAVVIIAGA) are cleaved as a signal peptide. Disordered regions lie at residues 33–53 (GSGA…RHGR) and 389–412 (VVTA…GARS).

The protein belongs to the membrane fusion protein (MFP) (TC 8.A.1) family. In terms of assembly, part of a tripartite efflux system composed of MdtA, MdtB and MdtC.

The protein resides in the cell inner membrane. This is Multidrug resistance protein MdtA from Klebsiella pneumoniae subsp. pneumoniae (strain ATCC 700721 / MGH 78578).